Reading from the N-terminus, the 404-residue chain is Protrudin (404 aa).

The segment at 1–20 is disordered; sequence MQTSEREGCGPEVSPSTVPE. Topologically, residues 1 to 66 are cytoplasmic; it reads MQTSEREGCG…AGDGVRYLLR (66 aa). Residues 1–92 form a sufficient for homooligomerization region; that stretch reads MQTSEREGCG…LFLTLNEGAW (92 aa). Residues 1-205 are sufficient for localization to endoplasmic reticulum tubular network and for interactions with REEP1, REEP5, ATL1, ATL2, ATL3 and SPAST; sequence MQTSEREGCG…LYLLPLCWVL (205 aa). The interval 51 to 64 is necessary for interaction with RAB11A and function in neurite outgrowth; that stretch reads LEPLKDAGDGVRYL. The helical transmembrane segment at 67–87 threads the bilayer; it reads WQTPLCSLLTCLGLNVLFLTL. Residue N88 is a topological domain, lumenal. Residues 89-109 form a helical membrane-spanning segment; it reads EGAWYSVGALMISVPALLGYL. The Cytoplasmic segment spans residues 110–187; it reads QEGCQARLSE…NPAVSSQFYG (78 aa). The segment at residues 188–208 is an intramembrane region (helical); that stretch reads ALLGTVCMLYLLPLCWVLALL. Residues 209 to 404 lie on the Cytoplasmic side of the membrane; the sequence is NSTLFLGNVE…CASCNQTLSK (196 aa). The segment at 234-286 is disordered; it reads MNPKQEESAFESPPPSDAGGKGALVDCTPAPTPTEDLTPGSVEEAEEAEPDEE. The interval 271-354 is necessary for interaction with KIF5A; sequence TPGSVEEAEE…GCSATFSVLK (84 aa). Residues 276-286 are compositionally biased toward acidic residues; sequence EEAEEAEPDEE. The segment at 286–292 is necessary for interaction with VAPA; the sequence is EFKDAIE. The FYVE-type zinc-finger motif lies at 337 to 403; that stretch reads TNNYGSCTGC…VCASCNQTLS (67 aa). Zn(2+) is bound by residues C343, C346, C359, C362, C367, C370, C395, and C398.

In terms of assembly, can form homooligomers (monomers, dimers and tetramers). Interacts with RAB11A (GDP-bound form); regulates RAB11A. Interacts with FKBP8; may negatively regulate ZFYVE27 phosphorylation. Interacts with VAPA (via MSP domain); may regulate ZFYVE27 retention in the endoplasmic reticulum and its function in cell projections formation. Interacts with VAPB (via MSP domain). Interacts with RAB11B (GDP-bound form), REEP1, REEP5, ATL1, ATL2, ATL3, SPAST, SURF4, KIF5A, KIF5B, KIF5C and RTN3. In terms of processing, phosphorylated. Phosphorylation is induced by NGF through the MAPK/ERK pathway and modulates interaction with RAB11A.

The protein localises to the recycling endosome membrane. Its subcellular location is the endoplasmic reticulum membrane. The protein resides in the cell projection. It localises to the growth cone membrane. Key regulator of RAB11-dependent vesicular trafficking during neurite extension through polarized membrane transport. Promotes axonal elongation and contributes to the establishment of neuronal cell polarity. Involved in nerve growth factor-induced neurite formation in VAPA-dependent manner. Contributes to both the formation and stabilization of the tubular ER network. Involved in ER morphogenesis by regulating the sheet-to-tubule balance and possibly the density of tubule interconnections. Acts as an adapter protein that facilitates the interaction of KIF5A with VAPA, VAPB, SURF4, RAB11A, RAB11B and RTN3 and the ZFYVE27-KIF5A complex contributes to the transport of these proteins in neurons. Can induce formation of neurite-like membrane protrusions in non-neuronal cells in a KIF5A/B-dependent manner. This Bos taurus (Bovine) protein is Protrudin (ZFYVE27).